A 127-amino-acid chain; its full sequence is RxLR effector protein CRE6 (127 aa).

Residues 1 to 19 (MIRNALLVLVFVLIGTISA) form the signal peptide. The RxLR-dEER signature appears at 48–67 (RLLRQGSVKEGGVHDATEER).

The protein belongs to the RxLR effector family.

Its subcellular location is the secreted. It localises to the host cell. In terms of biological role, effector that is involved in host plant infection. Contributes to virulence during the early infection stage, by inhibiting plant defense responses induced by both PAMP-triggered immunity (PTI) and effector-triggered immunity (ETI). The chain is RxLR effector protein CRE6 from Phytophthora infestans (strain T30-4) (Potato late blight agent).